Reading from the N-terminus, the 65-residue chain is Translational regulator CsrA (65 aa).

It belongs to the CsrA/RsmA family. In terms of assembly, homodimer; the beta-strands of each monomer intercalate to form a hydrophobic core, while the alpha-helices form wings that extend away from the core.

The protein localises to the cytoplasm. A key translational regulator that binds mRNA to regulate translation initiation and/or mRNA stability. Mediates global changes in gene expression, shifting from rapid growth to stress survival by linking envelope stress, the stringent response and the catabolite repression systems. Usually binds in the 5'-UTR; binding at or near the Shine-Dalgarno sequence prevents ribosome-binding, repressing translation, binding elsewhere in the 5'-UTR can activate translation and/or stabilize the mRNA. Its function is antagonized by small RNA(s). This is Translational regulator CsrA from Pseudomonas putida (strain ATCC 47054 / DSM 6125 / CFBP 8728 / NCIMB 11950 / KT2440).